Consider the following 679-residue polypeptide: DNA-directed RNA polymerase subunit beta' (679 aa).

Positions 69, 71, 84, and 87 each coordinate Zn(2+). Positions 486, 488, and 490 each coordinate Mg(2+).

It belongs to the RNA polymerase beta' chain family. RpoC1 subfamily. In plastids the minimal PEP RNA polymerase catalytic core is composed of four subunits: alpha, beta, beta', and beta''. When a (nuclear-encoded) sigma factor is associated with the core the holoenzyme is formed, which can initiate transcription. Mg(2+) serves as cofactor. The cofactor is Zn(2+).

It localises to the plastid. Its subcellular location is the chloroplast. It carries out the reaction RNA(n) + a ribonucleoside 5'-triphosphate = RNA(n+1) + diphosphate. Functionally, DNA-dependent RNA polymerase catalyzes the transcription of DNA into RNA using the four ribonucleoside triphosphates as substrates. The polypeptide is DNA-directed RNA polymerase subunit beta' (Physcomitrium patens (Spreading-leaved earth moss)).